The sequence spans 446 residues: Neuropeptide Y receptor type 5 (446 aa).

Over Met-1–Tyr-42 the chain is Extracellular. Residues Asn-10 and Asn-17 are each glycosylated (N-linked (GlcNAc...) asparagine). The helical transmembrane segment at Phe-43–Leu-63 threads the bilayer. Residues Met-64–Asn-77 lie on the Cytoplasmic side of the membrane. A helical transmembrane segment spans residues Phe-78 to Thr-98. The Extracellular segment spans residues Leu-99–Met-117. Residues Cys-114 and Cys-198 are joined by a disulfide bond. Residues Pro-118–Val-138 form a helical membrane-spanning segment. Topologically, residues Arg-139–Gly-156 are cytoplasmic. The chain crosses the membrane as a helical span at residues Tyr-157–Phe-177. Topologically, residues His-178 to Arg-208 are extracellular. The chain crosses the membrane as a helical span at residues Ile-209–Val-229. Residues Ser-230–Arg-369 are Cytoplasmic-facing. Residues Leu-370–Val-390 traverse the membrane as a helical segment. Topologically, residues Thr-391–Tyr-407 are extracellular. A helical membrane pass occupies residues Cys-408–Leu-428. Over Asn-429 to Ser-446 the chain is Cytoplasmic. Cys-442 carries S-palmitoyl cysteine lipidation.

This sequence belongs to the G-protein coupled receptor 1 family.

It is found in the cell membrane. Its function is as follows. Receptor for neuropeptide Y and peptide YY. The activity of this receptor is mediated by G proteins that inhibit adenylate cyclase activity. Seems to be associated with food intake. Could be involved in feeding disorders. The polypeptide is Neuropeptide Y receptor type 5 (NPY5R) (Canis lupus familiaris (Dog)).